The sequence spans 529 residues: Probable bifunctional tRNA threonylcarbamoyladenosine biosynthesis protein (529 aa).

The interval 1-324 is kae1; the sequence is MIVLGLEGTA…FRIDEVDAPW (324 aa). The Fe cation site is built by histidine 107, histidine 111, and tyrosine 128. L-threonylcarbamoyladenylate-binding positions include 128–132, aspartate 160, glycine 173, glutamate 177, and asparagine 257; that span reads YVSGG. Residue aspartate 285 participates in Fe cation binding. The 201-residue stretch at 329 to 529 folds into the Protein kinase domain; the sequence is SRKDYGKAGA…SAIRRRHRYV (201 aa). Residues 335–342 and lysine 355 each bind ATP; that span reads KAGAESRI. Aspartate 447 serves as the catalytic Proton acceptor; for kinase activity.

It in the N-terminal section; belongs to the KAE1 / TsaD family. In the C-terminal section; belongs to the protein kinase superfamily. Tyr protein kinase family. BUD32 subfamily. Component of the KEOPS complex that consists of Kae1, Bud32, Cgi121 and Pcc1; the whole complex dimerizes. Fe(2+) serves as cofactor.

Its subcellular location is the cytoplasm. The catalysed reaction is L-seryl-[protein] + ATP = O-phospho-L-seryl-[protein] + ADP + H(+). It carries out the reaction L-threonyl-[protein] + ATP = O-phospho-L-threonyl-[protein] + ADP + H(+). The enzyme catalyses L-threonylcarbamoyladenylate + adenosine(37) in tRNA = N(6)-L-threonylcarbamoyladenosine(37) in tRNA + AMP + H(+). Its function is as follows. Required for the formation of a threonylcarbamoyl group on adenosine at position 37 (t(6)A37) in tRNAs that read codons beginning with adenine. Is a component of the KEOPS complex that is probably involved in the transfer of the threonylcarbamoyl moiety of threonylcarbamoyl-AMP (TC-AMP) to the N6 group of A37. The Kae1 domain likely plays a direct catalytic role in this reaction. The Bud32 domain probably displays kinase activity that regulates Kae1 function. The sequence is that of Probable bifunctional tRNA threonylcarbamoyladenosine biosynthesis protein from Thermoplasma acidophilum (strain ATCC 25905 / DSM 1728 / JCM 9062 / NBRC 15155 / AMRC-C165).